The chain runs to 234 residues: Probable pectate lyase F (234 aa).

A signal peptide spans 1–17 (MFSRIALLPAFLPVALA). N-linked (GlcNAc...) asparagine glycans are attached at residues asparagine 168 and asparagine 194.

Belongs to the polysaccharide lyase 3 family. Ca(2+) is required as a cofactor.

Its subcellular location is the secreted. The catalysed reaction is Eliminative cleavage of (1-&gt;4)-alpha-D-galacturonan to give oligosaccharides with 4-deoxy-alpha-D-galact-4-enuronosyl groups at their non-reducing ends.. In terms of biological role, pectinolytic enzyme consist of four classes of enzymes: pectin lyase, polygalacturonase, pectin methylesterase and rhamnogalacturonase. Among pectinolytic enzymes, pectin lyase is the most important in depolymerization of pectin, since it cleaves internal glycosidic bonds of highly methylated pectins. Favors pectate, the anion, over pectin, the methyl ester. The sequence is that of Probable pectate lyase F (plyF) from Aspergillus flavus (strain ATCC 200026 / FGSC A1120 / IAM 13836 / NRRL 3357 / JCM 12722 / SRRC 167).